The chain runs to 863 residues: Nitrate reductase [NADH] (863 aa).

Cys-137 serves as a coordination point for Mo-molybdopterin. Residues 484-559 enclose the Cytochrome b5 heme-binding domain; it reads KKYVTKAMLE…LEQFYIAELA (76 aa). Heme is bound by residues His-519 and His-542. In terms of domain architecture, FAD-binding FR-type spans 602–719; sequence KKQKAAELKE…KGPIGHFHYD (118 aa). FAD is bound by residues 659-662, 676-680, Phe-688, 693-695, and Thr-746; these read RAYT, VVKIY, and KFS.

Belongs to the nitrate reductase family. Homodimer. The cofactor is FAD. It depends on Mo-molybdopterin as a cofactor. Heme serves as cofactor.

The catalysed reaction is nitrite + NAD(+) + H2O = nitrate + NADH + H(+). Functionally, nitrate reductase is a key enzyme involved in the first step of nitrate assimilation in plants, fungi and bacteria. This is Nitrate reductase [NADH] from Ulva prolifera (Green seaweed).